Here is a 268-residue protein sequence, read N- to C-terminus: Indole-3-glycerol phosphate synthase (268 aa).

Belongs to the TrpC family.

The enzyme catalyses 1-(2-carboxyphenylamino)-1-deoxy-D-ribulose 5-phosphate + H(+) = (1S,2R)-1-C-(indol-3-yl)glycerol 3-phosphate + CO2 + H2O. The protein operates within amino-acid biosynthesis; L-tryptophan biosynthesis; L-tryptophan from chorismate: step 4/5. The protein is Indole-3-glycerol phosphate synthase of Parafrankia sp. (strain EAN1pec).